The primary structure comprises 366 residues: Dihydroorotate dehydrogenase (quinone) (366 aa).

Residues 74–78 and threonine 98 contribute to the FMN site; that span reads AGFDK. Residue lysine 78 coordinates substrate. Substrate is bound at residue 123-127; that stretch reads NRMGF. FMN is bound by residues asparagine 156 and asparagine 189. Position 189 (asparagine 189) interacts with substrate. The active-site Nucleophile is serine 192. Asparagine 194 contributes to the substrate binding site. Lysine 231 and threonine 259 together coordinate FMN. Residue 260 to 261 participates in substrate binding; the sequence is NT. FMN contacts are provided by residues glycine 285, glycine 314, and 335 to 336; that span reads YT.

The protein belongs to the dihydroorotate dehydrogenase family. Type 2 subfamily. Monomer. FMN is required as a cofactor.

The protein resides in the cell membrane. It carries out the reaction (S)-dihydroorotate + a quinone = orotate + a quinol. Its pathway is pyrimidine metabolism; UMP biosynthesis via de novo pathway; orotate from (S)-dihydroorotate (quinone route): step 1/1. Catalyzes the conversion of dihydroorotate to orotate with quinone as electron acceptor. The polypeptide is Dihydroorotate dehydrogenase (quinone) (Kineococcus radiotolerans (strain ATCC BAA-149 / DSM 14245 / SRS30216)).